The chain runs to 456 residues: tRNA modification GTPase MnmE (456 aa).

Residues R24, E81, and K120 each coordinate (6S)-5-formyl-5,6,7,8-tetrahydrofolate. The 164-residue stretch at 216-379 (GMTVVIAGRP…LRDHLKACMG (164 aa)) folds into the TrmE-type G domain. Position 226 (N226) interacts with K(+). GTP contacts are provided by residues 226–231 (NAGKSS), 245–251 (TDIAGTT), 270–273 (DTAG), and 335–338 (NKAD). S230 is a binding site for Mg(2+). T245, I247, and T250 together coordinate K(+). T251 provides a ligand contact to Mg(2+). K456 contributes to the (6S)-5-formyl-5,6,7,8-tetrahydrofolate binding site.

The protein belongs to the TRAFAC class TrmE-Era-EngA-EngB-Septin-like GTPase superfamily. TrmE GTPase family. As to quaternary structure, homodimer. Heterotetramer of two MnmE and two MnmG subunits. The cofactor is K(+).

The protein localises to the cytoplasm. Exhibits a very high intrinsic GTPase hydrolysis rate. Involved in the addition of a carboxymethylaminomethyl (cmnm) group at the wobble position (U34) of certain tRNAs, forming tRNA-cmnm(5)s(2)U34. The sequence is that of tRNA modification GTPase MnmE from Pseudomonas fluorescens (strain ATCC BAA-477 / NRRL B-23932 / Pf-5).